The following is a 226-amino-acid chain: Thymidylate kinase (226 aa).

An ATP-binding site is contributed by 20–27 (GGEGAGKS).

This sequence belongs to the thymidylate kinase family.

The catalysed reaction is dTMP + ATP = dTDP + ADP. Phosphorylation of dTMP to form dTDP in both de novo and salvage pathways of dTTP synthesis. This chain is Thymidylate kinase, found in Bradyrhizobium sp. (strain BTAi1 / ATCC BAA-1182).